A 113-amino-acid polypeptide reads, in one-letter code: Large ribosomal subunit protein bL17 (113 aa).

It belongs to the bacterial ribosomal protein bL17 family. As to quaternary structure, part of the 50S ribosomal subunit. Contacts protein L32.

This chain is Large ribosomal subunit protein bL17, found in Clostridium tetani (strain Massachusetts / E88).